A 162-amino-acid chain; its full sequence is Dihydrofolate reductase (162 aa).

Residues 3 to 161 (KITLIAACAE…TRYAFVHYLR (159 aa)) enclose the DHFR domain. Residue 7–9 (IAA) participates in substrate binding. NADP(+) is bound by residues 8-9 (AA) and 16-21 (IGAGNA). D29 is a substrate binding site. 45–48 (GRKT) contacts NADP(+). R60 contacts substrate. NADP(+) is bound by residues 65–68 (ISRQ) and 98–103 (MGGAQI). T117 is a substrate binding site.

Belongs to the dihydrofolate reductase family.

It catalyses the reaction (6S)-5,6,7,8-tetrahydrofolate + NADP(+) = 7,8-dihydrofolate + NADPH + H(+). The protein operates within cofactor biosynthesis; tetrahydrofolate biosynthesis; 5,6,7,8-tetrahydrofolate from 7,8-dihydrofolate: step 1/1. Its function is as follows. Key enzyme in folate metabolism. Catalyzes an essential reaction for de novo glycine and purine synthesis, and for DNA precursor synthesis. The polypeptide is Dihydrofolate reductase (folA) (Neisseria meningitidis serogroup B (strain ATCC BAA-335 / MC58)).